Here is a 394-residue protein sequence, read N- to C-terminus: Argininosuccinate synthase (394 aa).

ATP contacts are provided by residues 7 to 15 and alanine 34; that span reads AYSGGLDTS. L-citrulline-binding residues include tyrosine 85 and serine 90. Residue glycine 115 coordinates ATP. Residues threonine 117, asparagine 121, and aspartate 122 each contribute to the L-aspartate site. Asparagine 121 serves as a coordination point for L-citrulline. Arginine 125, serine 176, serine 185, glutamate 261, and tyrosine 273 together coordinate L-citrulline.

The protein belongs to the argininosuccinate synthase family. Type 1 subfamily. Homotetramer.

It is found in the cytoplasm. The enzyme catalyses L-citrulline + L-aspartate + ATP = 2-(N(omega)-L-arginino)succinate + AMP + diphosphate + H(+). It participates in amino-acid biosynthesis; L-arginine biosynthesis; L-arginine from L-ornithine and carbamoyl phosphate: step 2/3. The sequence is that of Argininosuccinate synthase from Ehrlichia ruminantium (strain Gardel).